Reading from the N-terminus, the 184-residue chain is Large ribosomal subunit protein bL9 (184 aa).

The tract at residues 160-184 (LQNQKSEQQEAEQDANKEATDGDDS) is disordered. Residues 173 to 184 (DANKEATDGDDS) are compositionally biased toward basic and acidic residues.

This sequence belongs to the bacterial ribosomal protein bL9 family.

In terms of biological role, binds to the 23S rRNA. The sequence is that of Large ribosomal subunit protein bL9 from Wolbachia pipientis wMel.